Here is a 479-residue protein sequence, read N- to C-terminus: Glutamate--tRNA ligase (479 aa).

The 'HIGH' region signature appears at 9–19 (PSPTGNLHIGT). A 'KMSKS' region motif is present at residues 243–247 (KLSKR). Position 246 (lysine 246) interacts with ATP.

Belongs to the class-I aminoacyl-tRNA synthetase family. Glutamate--tRNA ligase type 1 subfamily. In terms of assembly, monomer.

It is found in the cytoplasm. It catalyses the reaction tRNA(Glu) + L-glutamate + ATP = L-glutamyl-tRNA(Glu) + AMP + diphosphate. Its function is as follows. Catalyzes the attachment of glutamate to tRNA(Glu) in a two-step reaction: glutamate is first activated by ATP to form Glu-AMP and then transferred to the acceptor end of tRNA(Glu). The protein is Glutamate--tRNA ligase of Synechococcus sp. (strain JA-3-3Ab) (Cyanobacteria bacterium Yellowstone A-Prime).